The following is a 343-amino-acid chain: NADH-cytochrome b5 reductase 2 (343 aa).

A helical membrane pass occupies residues 41 to 61; it reads ILLGAAAVGLAGAGAYFFSGA. Positions 92-197 constitute an FAD-binding FR-type domain; the sequence is QGWLSLKLEE…KGPLPKYPWE (106 aa). 200–235 contributes to the FAD binding site; the sequence is KHKHIALVAGGTGITPMYQLIRAIFNNPDDKTKVTL.

Belongs to the flavoprotein pyridine nucleotide cytochrome reductase family. It depends on FAD as a cofactor.

Its subcellular location is the mitochondrion outer membrane. The catalysed reaction is 2 Fe(III)-[cytochrome b5] + NADH = 2 Fe(II)-[cytochrome b5] + NAD(+) + H(+). In terms of biological role, may mediate the reduction of outer membrane cytochrome b5. In Neurospora crassa (strain ATCC 24698 / 74-OR23-1A / CBS 708.71 / DSM 1257 / FGSC 987), this protein is NADH-cytochrome b5 reductase 2 (mcr-1).